The chain runs to 943 residues: Zinc finger BED domain-containing protein 39 (943 aa).

The tract at residues 1–99 (MSSVSSDIDG…DIAMDVSGST (99 aa)) is disordered. Positions 12–21 (PETKRFRIDV) are enriched in basic and acidic residues. Low complexity predominate over residues 50-72 (SPAAPSSASYRSSNSSVISSSES). Residues 73-85 (PIKDEDVDVHDGQ) are compositionally biased toward basic and acidic residues. Residues 184–235 (NKQTPVWKYFVYNKTENLSRCIVGDCTYMLKGPHTSTLACHLKKHTREYSEF) form a BED-type; degenerate zinc finger. Disordered stretches follow at residues 242-315 (YSRT…KEPS) and 328-348 (RQAT…PQLP). Residues 262–276 (TLQTQNTPRQTGSPA) are compositionally biased toward polar residues. The span at 277–292 (STCNTNSNTSSSVSSG) shows a compositional bias: low complexity. The segment covering 328-338 (RQATNNSNGSP) has biased composition (polar residues).

In terms of tissue distribution, expressed in distal tip cells and in germline cells.

It is found in the nucleus. The protein resides in the cytoplasm. Functionally, regulates the timing and orientation of distal tip cell migration during gonadal development. May act in parallel to cacn-1 and Rac GTPases to control the anterior and posterior migration of distal tip cells. The protein is Zinc finger BED domain-containing protein 39 of Caenorhabditis elegans.